The primary structure comprises 234 residues: Large ribosomal subunit protein bL25 (234 aa).

The tract at residues 1–24 is disordered; sequence MATVMELKATARPKSGKGAARAER.

It belongs to the bacterial ribosomal protein bL25 family. CTC subfamily. As to quaternary structure, part of the 50S ribosomal subunit; part of the 5S rRNA/L5/L18/L25 subcomplex. Contacts the 5S rRNA. Binds to the 5S rRNA independently of L5 and L18.

Its function is as follows. This is one of the proteins that binds to the 5S RNA in the ribosome where it forms part of the central protuberance. The protein is Large ribosomal subunit protein bL25 of Rhodopseudomonas palustris (strain BisB5).